We begin with the raw amino-acid sequence, 176 residues long: Disulfide bond formation protein B (176 aa).

Residues 1–14 (MLQFLNRCSRGRGA) are Cytoplasmic-facing. Residues 15–31 (WLLMALTAFLLELTALY) traverse the membrane as a helical segment. At 32–49 (FQHIMLLQPCVMCIYERV) the chain is on the periplasmic side. Residues cysteine 41 and cysteine 44 are joined by a disulfide bond. Residues 50-65 (ALFGILGASLLGAIAP) traverse the membrane as a helical segment. Residues 66-71 (RSPLRY) are Cytoplasmic-facing. The chain crosses the membrane as a helical span at residues 72–89 (LAIAVWIYSAWKGVQLAW). Residues 90–144 (AHTMLQLNPSPFNTCDFFVNFPSWLPLDKWLPAVFAASGDCSERQWQFMSLEMPQ) are Periplasmic-facing. Cysteine 104 and cysteine 130 form a disulfide bridge. Residues 145 to 163 (WLVGIFAAYLVIAVLVLIS) form a helical membrane-spanning segment. At 164 to 176 (QFVKPKRRDLFGR) the chain is on the cytoplasmic side.

This sequence belongs to the DsbB family.

It localises to the cell inner membrane. Functionally, required for disulfide bond formation in some periplasmic proteins. Acts by oxidizing the DsbA protein. The protein is Disulfide bond formation protein B of Yersinia pestis bv. Antiqua (strain Nepal516).